The sequence spans 222 residues: Transcriptional regulatory protein BasR (222 aa).

Residues 2-116 enclose the Response regulatory domain; sequence KILIVEDDTL…ELHARIRALL (115 aa). Aspartate 51 is subject to 4-aspartylphosphate. A DNA-binding region (ompR/PhoB-type) is located at residues 124–218; the sequence is ESELIVGNLT…VRGFGYMLVA (95 aa).

In terms of assembly, homodimer. Post-translationally, phosphorylated by BasS.

Its subcellular location is the cytoplasm. In terms of biological role, member of the two-component regulatory system BasS/BasR. BasR induces the transcription of the ugd, ais, arnBCADTEF and eptA-basRS loci, all involved in resistance to polymyxin. The polypeptide is Transcriptional regulatory protein BasR (basR) (Escherichia coli (strain K12)).